The primary structure comprises 106 residues: Putative double-stranded DNA mimic protein VCM66_1163 (106 aa).

Belongs to the putative dsDNA mimic protein family.

May act as a double-stranded DNA (dsDNA) mimic. Probably regulates the activity of a dsDNA-binding protein. The chain is Putative double-stranded DNA mimic protein VCM66_1163 from Vibrio cholerae serotype O1 (strain M66-2).